The primary structure comprises 346 residues: tRNA (guanine-N(7)-)-methyltransferase (346 aa).

S-adenosyl-L-methionine is bound by residues Gly-101 and 124–125 (EI). The segment at 149–191 (LKSAGGGGSDAAPESPAAPPTPSEAASPDSTTPSEQQAPTTLV) is disordered. Residues 171–182 (SEAASPDSTTPS) are compositionally biased toward low complexity. Residues 204 to 205 (NT) and Cys-224 contribute to the S-adenosyl-L-methionine site. Asp-227 is a catalytic residue. 318–320 (TEE) contributes to the S-adenosyl-L-methionine binding site.

It belongs to the class I-like SAM-binding methyltransferase superfamily. TrmB family. In terms of assembly, forms a complex with trm82.

It localises to the nucleus. It carries out the reaction guanosine(46) in tRNA + S-adenosyl-L-methionine = N(7)-methylguanosine(46) in tRNA + S-adenosyl-L-homocysteine. The protein operates within tRNA modification; N(7)-methylguanine-tRNA biosynthesis. Catalyzes the formation of N(7)-methylguanine at position 46 (m7G46) in tRNA. This chain is tRNA (guanine-N(7)-)-methyltransferase (trm8), found in Aspergillus terreus (strain NIH 2624 / FGSC A1156).